The sequence spans 572 residues: Chaperonin CPN60-like 2, mitochondrial (572 aa).

Residues 1–31 constitute a mitochondrion transit peptide; it reads MYRVLSKLSSSIGSSTSRKLVSGRIISSRNY.

It belongs to the chaperonin (HSP60) family.

It localises to the mitochondrion. Implicated in mitochondrial protein import and macromolecular assembly. May facilitate the correct folding of imported proteins. May also prevent misfolding and promote the refolding and proper assembly of unfolded polypeptides generated under stress conditions in the mitochondrial matrix. The polypeptide is Chaperonin CPN60-like 2, mitochondrial (Arabidopsis thaliana (Mouse-ear cress)).